Consider the following 481-residue polypeptide: Bifunctional protein HldE (481 aa).

The interval 1 to 318 (MKVTLPDFRR…ENAIRGRAET (318 aa)) is ribokinase. Residue 195–198 (NLSE) participates in ATP binding. The active site involves aspartate 264. Positions 344 to 481 (MTNGIFDILH…KRRAGQRTVV (138 aa)) are cytidylyltransferase.

It in the N-terminal section; belongs to the carbohydrate kinase PfkB family. In the C-terminal section; belongs to the cytidylyltransferase family. As to quaternary structure, homodimer.

The catalysed reaction is D-glycero-beta-D-manno-heptose 7-phosphate + ATP = D-glycero-beta-D-manno-heptose 1,7-bisphosphate + ADP + H(+). The enzyme catalyses D-glycero-beta-D-manno-heptose 1-phosphate + ATP + H(+) = ADP-D-glycero-beta-D-manno-heptose + diphosphate. It functions in the pathway nucleotide-sugar biosynthesis; ADP-L-glycero-beta-D-manno-heptose biosynthesis; ADP-L-glycero-beta-D-manno-heptose from D-glycero-beta-D-manno-heptose 7-phosphate: step 1/4. The protein operates within nucleotide-sugar biosynthesis; ADP-L-glycero-beta-D-manno-heptose biosynthesis; ADP-L-glycero-beta-D-manno-heptose from D-glycero-beta-D-manno-heptose 7-phosphate: step 3/4. Functionally, catalyzes the phosphorylation of D-glycero-D-manno-heptose 7-phosphate at the C-1 position to selectively form D-glycero-beta-D-manno-heptose-1,7-bisphosphate. In terms of biological role, catalyzes the ADP transfer from ATP to D-glycero-beta-D-manno-heptose 1-phosphate, yielding ADP-D-glycero-beta-D-manno-heptose. This chain is Bifunctional protein HldE, found in Sodalis glossinidius (strain morsitans).